Consider the following 517-residue polypeptide: Putative lipase ATG15 (517 aa).

The Cytoplasmic segment spans residues 1-6; it reads MRASTH. A helical; Signal-anchor for type II membrane protein transmembrane segment spans residues 7–27; the sequence is SWLLLVVVLSLSSFTVNAVIL. The Lumenal portion of the chain corresponds to 28–517; the sequence is EGLIPPRSHL…TNWHFTDETL (490 aa). 3 N-linked (GlcNAc...) asparagine glycosylation sites follow: asparagine 187, asparagine 221, and asparagine 303. Serine 319 functions as the Charge relay system in the catalytic mechanism. A disordered region spans residues 466–499; that stretch reads GWRWPWHRGDSADDDGDSDEDTDEDDKLAVPKAR. A compositionally biased stretch (acidic residues) spans 477–491; sequence ADDDGDSDEDTDEDD.

It belongs to the AB hydrolase superfamily. Lipase family. In terms of assembly, binds to both phosphatidylinositol (PI) and phosphatidylinositol 3,5-bisphosphate (PIP2).

It localises to the endosome. The protein localises to the multivesicular body membrane. The protein resides in the prevacuolar compartment membrane. It catalyses the reaction a triacylglycerol + H2O = a diacylglycerol + a fatty acid + H(+). Its function is as follows. Lipase which is essential for lysis of subvacuolar cytoplasm to vacuole targeted bodies and intravacuolar autophagic bodies. Involved in the lysis of intravacuolar multivesicular body (MVB) vesicles. The intravacuolar membrane disintegration by ATG15 is critical to life span extension. This is Putative lipase ATG15 (ATG15) from Mycosarcoma maydis (Corn smut fungus).